The chain runs to 327 residues: 2-methoxy-6-polyprenyl-1,4-benzoquinol methylase, mitochondrial (327 aa).

Residues 1-49 (MAAPRCCVLWRVCGRGWWRATGHCRLPGCHRSWPWATLGTRSLSQEKRA) constitute a mitochondrion transit peptide. Residues Thr117, Asp171, and 199–200 (DA) each bind S-adenosyl-L-methionine.

Belongs to the class I-like SAM-binding methyltransferase superfamily. MenG/UbiE family. Component of a multi-subunit COQ enzyme complex, composed of at least COQ3, COQ4, COQ5, COQ6, COQ7 and COQ9. Interacts with PYURF; the interaction is direct, stabilizes COQ5 protein and associates PYURF with COQ enzyme complex.

The protein localises to the mitochondrion inner membrane. The enzyme catalyses 2-methoxy-6-(all-trans-decaprenyl)benzene-1,4-diol + S-adenosyl-L-methionine = 5-methoxy-2-methyl-3-(all-trans-decaprenyl)benzene-1,4-diol + S-adenosyl-L-homocysteine + H(+). Its pathway is cofactor biosynthesis; ubiquinone biosynthesis. Methyltransferase required for the conversion of 2-decaprenyl-6-methoxy-1,4-benzoquinol (DDMQH2) to 2-decaprenyl-3-methyl-6-methoxy-1,4-benzoquinol (DMQH2). In Mus musculus (Mouse), this protein is 2-methoxy-6-polyprenyl-1,4-benzoquinol methylase, mitochondrial.